The chain runs to 253 residues: UPF0246 protein LBA1843 (253 aa).

The protein belongs to the UPF0246 family.

The sequence is that of UPF0246 protein LBA1843 from Lactobacillus acidophilus (strain ATCC 700396 / NCK56 / N2 / NCFM).